The following is a 70-amino-acid chain: Small ribosomal subunit protein eS17 (70 aa).

This sequence belongs to the eukaryotic ribosomal protein eS17 family.

The polypeptide is Small ribosomal subunit protein eS17 (Methanopyrus kandleri (strain AV19 / DSM 6324 / JCM 9639 / NBRC 100938)).